Reading from the N-terminus, the 300-residue chain is Cation-efflux pump FieF (300 aa).

Helical transmembrane passes span A12–W32, I39–V59, A82–I102, P114–F134, M151–S171, and W172–Y192. Zn(2+) contacts are provided by D45 and D49. Positions 153 and 157 each coordinate Zn(2+).

This sequence belongs to the cation diffusion facilitator (CDF) transporter (TC 2.A.4) family. FieF subfamily. In terms of assembly, homodimer.

It localises to the cell inner membrane. The enzyme catalyses Zn(2+)(in) + H(+)(out) = Zn(2+)(out) + H(+)(in). The catalysed reaction is Cd(2+)(in) + H(+)(out) = Cd(2+)(out) + H(+)(in). It carries out the reaction Fe(2+)(in) + H(+)(out) = Fe(2+)(out) + H(+)(in). Divalent metal cation transporter which exports Zn(2+), Cd(2+) and possibly Fe(2+). May be involved in zinc and iron detoxification by efflux. In Escherichia fergusonii (strain ATCC 35469 / DSM 13698 / CCUG 18766 / IAM 14443 / JCM 21226 / LMG 7866 / NBRC 102419 / NCTC 12128 / CDC 0568-73), this protein is Cation-efflux pump FieF.